The following is a 369-amino-acid chain: Queuine tRNA-ribosyltransferase (369 aa).

The active-site Proton acceptor is the aspartate 89. Substrate-binding positions include 89 to 93 (DSGGF), aspartate 142, glutamine 184, and glycine 211. The tract at residues 242-248 (GGGSPEL) is RNA binding. Aspartate 261 (nucleophile) is an active-site residue. Residues 266 to 270 (TRIAR) are RNA binding; important for wobble base 34 recognition. Zn(2+) is bound by residues cysteine 299, cysteine 301, cysteine 304, and histidine 330.

This sequence belongs to the queuine tRNA-ribosyltransferase family. As to quaternary structure, homodimer. Within each dimer, one monomer is responsible for RNA recognition and catalysis, while the other monomer binds to the replacement base PreQ1. The cofactor is Zn(2+).

The enzyme catalyses 7-aminomethyl-7-carbaguanine + guanosine(34) in tRNA = 7-aminomethyl-7-carbaguanosine(34) in tRNA + guanine. The protein operates within tRNA modification; tRNA-queuosine biosynthesis. Catalyzes the base-exchange of a guanine (G) residue with the queuine precursor 7-aminomethyl-7-deazaguanine (PreQ1) at position 34 (anticodon wobble position) in tRNAs with GU(N) anticodons (tRNA-Asp, -Asn, -His and -Tyr). Catalysis occurs through a double-displacement mechanism. The nucleophile active site attacks the C1' of nucleotide 34 to detach the guanine base from the RNA, forming a covalent enzyme-RNA intermediate. The proton acceptor active site deprotonates the incoming PreQ1, allowing a nucleophilic attack on the C1' of the ribose to form the product. After dissociation, two additional enzymatic reactions on the tRNA convert PreQ1 to queuine (Q), resulting in the hypermodified nucleoside queuosine (7-(((4,5-cis-dihydroxy-2-cyclopenten-1-yl)amino)methyl)-7-deazaguanosine). The sequence is that of Queuine tRNA-ribosyltransferase from Thermotoga maritima (strain ATCC 43589 / DSM 3109 / JCM 10099 / NBRC 100826 / MSB8).